A 312-amino-acid polypeptide reads, in one-letter code: Olfactory receptor 2L2 (312 aa).

At 1–24 (MENYNQTSTDFILLGLFPQSRIGL) the chain is on the extracellular side. An N-linked (GlcNAc...) asparagine glycan is attached at asparagine 5. The chain crosses the membrane as a helical span at residues 25 to 48 (FVFTLIFLIFLMALIGNLSMILLI). Over 49–56 (FLDIHLHT) the chain is Cytoplasmic. The helical transmembrane segment at 57–78 (PMYFLLSQLSLIDLNYISTIVP) threads the bilayer. Residues 79–99 (KMVYDFLYGNKSISFTGCGIQ) lie on the Extracellular side of the membrane. N-linked (GlcNAc...) asparagine glycosylation occurs at asparagine 88. Cysteine 96 and cysteine 188 are oxidised to a cystine. A helical transmembrane segment spans residues 100–119 (SFFFLTLAVAEGLLLTSMAY). At 120–138 (DRYVAICFPLHYPIRISKR) the chain is on the cytoplasmic side. A helical membrane pass occupies residues 139 to 157 (VCVMMITGSWMISSINSCA). At 158-194 (HTVYALCIPYCKSRAINHFFCDVPAMLTLACTDTWVY) the chain is on the extracellular side. Residues 195-218 (ESTVFLSSTIFLVLPFTGIACSYG) traverse the membrane as a helical segment. At 219-235 (RVLLAVYRMHSAEGRKK) the chain is on the cytoplasmic side. A helical membrane pass occupies residues 236 to 258 (AYSTCSTHLTVVSFYYAPFAYTY). The Extracellular portion of the chain corresponds to 259–271 (VRPRSLRSPTEDK). A helical membrane pass occupies residues 272–291 (ILAVFYTILTPMLNPIIYSL). At 292–312 (RNKEVMGALTQVIQKIFSVKM) the chain is on the cytoplasmic side.

Belongs to the G-protein coupled receptor 1 family.

The protein resides in the cell membrane. Odorant receptor. This is Olfactory receptor 2L2 (OR2L2) from Homo sapiens (Human).